A 251-amino-acid chain; its full sequence is Prolactin-7B1 (251 aa).

An N-terminal signal peptide occupies residues Met-1–Ser-29. Asn-2 and Asn-73 each carry an N-linked (GlcNAc...) asparagine glycan. 2 cysteine pairs are disulfide-bonded: Cys-100–Cys-216 and Cys-233–Cys-241.

It belongs to the somatotropin/prolactin family. As to expression, expression restricted to placenta. Abundantly expressed in trophoblast cells of the junctional zone and trophoblasts migrating into the mesometrial decidua.

It is found in the secreted. This chain is Prolactin-7B1 (Prl7b1), found in Mus musculus (Mouse).